A 569-amino-acid chain; its full sequence is Proline--tRNA ligase (569 aa).

The protein belongs to the class-II aminoacyl-tRNA synthetase family. ProS type 1 subfamily. Homodimer.

It is found in the cytoplasm. The catalysed reaction is tRNA(Pro) + L-proline + ATP = L-prolyl-tRNA(Pro) + AMP + diphosphate. Catalyzes the attachment of proline to tRNA(Pro) in a two-step reaction: proline is first activated by ATP to form Pro-AMP and then transferred to the acceptor end of tRNA(Pro). As ProRS can inadvertently accommodate and process non-cognate amino acids such as alanine and cysteine, to avoid such errors it has two additional distinct editing activities against alanine. One activity is designated as 'pretransfer' editing and involves the tRNA(Pro)-independent hydrolysis of activated Ala-AMP. The other activity is designated 'posttransfer' editing and involves deacylation of mischarged Ala-tRNA(Pro). The misacylated Cys-tRNA(Pro) is not edited by ProRS. The polypeptide is Proline--tRNA ligase (Colwellia psychrerythraea (strain 34H / ATCC BAA-681) (Vibrio psychroerythus)).